We begin with the raw amino-acid sequence, 391 residues long: Protein NirF (391 aa).

It localises to the cytoplasm. In terms of biological role, required for the biosynthesis of heme d1 of nitrite reductase. Could have a dehydrogenase activity yielding sirohydrochlorin from precorrin-2 or dehydrogenation of propionate side chain C17. This Stutzerimonas stutzeri (Pseudomonas stutzeri) protein is Protein NirF (nirF).